We begin with the raw amino-acid sequence, 585 residues long: MLVAAFFTLFLVTCQPAVTAQEKVNQRVNRAATPRAFDCQLSSWSEWTDCFPCQDTKYRHRSLLQPNKFGGTICSGDIWDRASCYSPTACLRPAQCGQDFQCKETGRCLKRHLVCNGENDCLDGSDEDNCEDIRATESDCAQYDPIPGSEKAALGYNILTQEEAQSVYDARYYGGRCETVYNGEWRHVRYDPVCERLHHGEDDKYFRKPYNFLKYHFEARADTGISFELYVDGNDLFSKVKNDKSHSAGVTISAGLTGSPLLGTVGVSGSEDASFLNKLSQYNEKKYNFMRIFTKVQTAHFKMRRDDIVLDEGMLQALVELPEQYNYGMYSKFINDYGTHYITSGSMGGTYEYILVLNTEKMESLGVTSEDISSCFGGFGEIQYEKGKINAQGILSGKHCKKSGSGDKEADKMGQAVKDIISRVRGGSSGWGGGLSQNGSATTYRFWGRSLKYNPVVIDFEMQPIHEVLLHTNLGHVEAKRQNLRRALDQYLMEFNACRCGPCFNNGKPILEGTSCRCQCSLGLQGPACEQTEQQGAKADGHWSCWGSWSPCTAGTRERRRECNNPAPQNGGAPCPGWRVQTQAC.

The N-terminal stretch at 1 to 20 is a signal peptide; the sequence is MLVAAFFTLFLVTCQPAVTA. A propeptide spanning residues 21-30 is cleaved from the precursor; sequence QEKVNQRVNR. Residues 38–91 form the TSP type-1 1 domain; that stretch reads DCQLSSWSEWTDCFPCQDTKYRHRSLLQPNKFGGTICSGDIWDRASCYSPTACL. 7 disulfides stabilise this stretch: C39–C74, C50–C84, C53–C90, C96–C108, C102–C121, C115–C130, and C140–C177. Residue W44 is glycosylated (C-linked (Man) tryptophan). Residues 94-132 form the LDL-receptor class A domain; sequence AQCGQDFQCKETGRCLKRHLVCNGENDCLDGSDEDNCED. Ca(2+) contacts are provided by L113, N116, E118, D120, D126, and E127. The region spanning 136 to 499 is the MACPF domain; the sequence is TESDCAQYDP…QYLMEFNACR (364 aa). Beta stranded transmembrane passes span 248–256, 259–266, 377–384, and 391–396; these read AGVTISAGL, SPLLGTVG, GGFGEIQY, and AQGILS. The cysteines at positions 375 and 400 are disulfide-linked. N438 carries an N-linked (GlcNAc...) asparagine glycan. 4 disulfide bridges follow: C498–C545, C500–C516, C503–C518, and C520–C529. Positions 499–530 constitute an EGF-like domain; the sequence is RCGPCFNNGKPILEGTSCRCQCSLGLQGPACE. One can recognise a TSP type-1 2 domain in the interval 540-584; sequence DGHWSCWGSWSPCTAGTRERRRECNNPAPQNGGAPCPGWRVQTQA. W543, W546, and W549 each carry a C-linked (Man) tryptophan glycan. Cystine bridges form between C552-C585 and C563-C575.

This sequence belongs to the complement C6/C7/C8/C9 family. As to quaternary structure, heterotrimer of 3 chains: alpha (C8A), beta (C8B) and gamma (C8G); the alpha and gamma chains are disulfide bonded. Component of the membrane attack complex (MAC), composed of complement C5b, C6, C7, C8A, C8B, C8G and multiple copies of the pore-forming subunit C9.

It localises to the secreted. The protein resides in the target cell membrane. Its activity is regulated as follows. Membrane attack complex (MAC) assembly is inhibited by CD59, thereby protecting self-cells from damage during complement activation. CD59 acts by binding to the beta-haipins of C8 (C8A and C8B), forming an intermolecular beta-sheet that prevents incorporation of the multiple copies of C9 required for complete formation of the osmolytic pore. MAC assembly is also inhibited by clusterin (CLU) chaperones that inhibit polymerization of C9. Component of the membrane attack complex (MAC), a multiprotein complex activated by the complement cascade, which inserts into a target cell membrane and forms a pore, leading to target cell membrane rupture and cell lysis. The MAC is initiated by proteolytic cleavage of C5 into complement C5b in response to the classical, alternative, lectin and GZMK complement pathways. The complement pathways consist in a cascade of proteins that leads to phagocytosis and breakdown of pathogens and signaling that strengthens the adaptive immune system. C8A, together with C8B and C8G, inserts into the target membrane, but does not form pores by itself. During MAC assembly, associates with C5b, C6 and C7 to form the C5b8 intermediate complex that inserts into the target membrane and traverses the bilayer increasing membrane rigidity. The polypeptide is Complement component C8 alpha chain (C8A) (Oryctolagus cuniculus (Rabbit)).